A 208-amino-acid polypeptide reads, in one-letter code: MMRKLSPGSKIVLASHNAGKLREFSTLLAESGITVISAAELDLPEPEETEETFTGNAAIKALAAARASGLPALADDSGFCVSALDNRPGVYSARWGGPTKDMQVAMERVHREMGDNPDQRAFFVAALCLAWPDGETRTVQGECHGTVVWPPRGDHGHGYDPMFVPEGESRTFAEMSEAEKNAVSHRGRALTAFLNTCLDTSTQKTERK.

15 to 20 (SHNAGK) provides a ligand contact to substrate. 2 residues coordinate Mg(2+): E47 and D76. D76 acts as the Proton acceptor in catalysis. Substrate-binding positions include S77, 157 to 160 (HGYD), K180, and 185 to 186 (HR).

It belongs to the HAM1 NTPase family. In terms of assembly, homodimer. The cofactor is Mg(2+).

It catalyses the reaction XTP + H2O = XMP + diphosphate + H(+). It carries out the reaction dITP + H2O = dIMP + diphosphate + H(+). The enzyme catalyses ITP + H2O = IMP + diphosphate + H(+). In terms of biological role, pyrophosphatase that catalyzes the hydrolysis of nucleoside triphosphates to their monophosphate derivatives, with a high preference for the non-canonical purine nucleotides XTP (xanthosine triphosphate), dITP (deoxyinosine triphosphate) and ITP. Seems to function as a house-cleaning enzyme that removes non-canonical purine nucleotides from the nucleotide pool, thus preventing their incorporation into DNA/RNA and avoiding chromosomal lesions. The chain is dITP/XTP pyrophosphatase from Gluconobacter oxydans (strain 621H) (Gluconobacter suboxydans).